The primary structure comprises 331 residues: 6-phosphogluconolactonase (331 aa).

Lysine 287 carries the post-translational modification N6-acetyllysine.

The protein belongs to the cycloisomerase 2 family.

It carries out the reaction 6-phospho-D-glucono-1,5-lactone + H2O = 6-phospho-D-gluconate + H(+). Its pathway is carbohydrate degradation; pentose phosphate pathway; D-ribulose 5-phosphate from D-glucose 6-phosphate (oxidative stage): step 2/3. Functionally, catalyzes the hydrolysis of 6-phosphogluconolactone to 6-phosphogluconate. The polypeptide is 6-phosphogluconolactonase (Escherichia coli O6:K15:H31 (strain 536 / UPEC)).